We begin with the raw amino-acid sequence, 1663 residues long: Cortactin-binding protein 2 (1663 aa).

Disordered stretches follow at residues 1 to 26 (MATD…TAEA), 203 to 225 (KKKT…DMEA), 359 to 440 (QASH…LHPG), 454 to 478 (GNAN…SPTS), and 497 to 615 (SRFT…PPKP). Positions 119 to 276 (RKMQERMSTQ…EQLKRGSDSK (158 aa)) form a coiled coil. Composition is skewed to polar residues over residues 385–396 (GPSTDSAPDLTN) and 418–435 (QSHS…SANA). Arginine 498 bears the Asymmetric dimethylarginine mark. Pro residues predominate over residues 606–615 (PTTPQLPPKP). ANK repeat units lie at residues 709 to 739 (GRPT…DINY), 743 to 772 (DGHS…QVDA), 776 to 805 (NGFT…DINH), 809 to 838 (GGQT…DRSV), 842 to 871 (DGWT…PARG), and 912 to 942 (EGWT…EPDR). A disordered region spans residues 1449-1490 (KGENGTWRKVSTSPRKKSGHFSSPTWNKPDLNEEGIRNTTTS). Serine 1524 bears the Phosphoserine mark. The tract at residues 1579–1663 (VSEKEVSPLS…KNEQVEKPNK (85 aa)) is disordered. The segment covering 1586 to 1595 (PLSSHQTTEC) has biased composition (polar residues). Over residues 1624 to 1638 (SQNTKRSSSSSNTRQ) the composition is skewed to low complexity. The span at 1645-1663 (SKEEIWNLHKNEQVEKPNK) shows a compositional bias: basic and acidic residues.

In terms of assembly, interacts with CTTN/cortactin SH3 domain. Interacts with STRN, STRN4/zinedin and MOB4/phocein; this interactions mediate the association with the STRIPAK core complex and may regulate dendritic spine distribution of the STRIPAK complex in hippocampal neurons. Activation of glutamate receptors weakens the interaction with STRN and STRN4.

It localises to the cytoplasm. Its subcellular location is the cell cortex. It is found in the cell projection. The protein resides in the dendritic spine. Regulates the dendritic spine distribution of CTTN/cortactin in hippocampal neurons, and thus controls dendritic spinogenesis and dendritic spine maintenance. Associates with the striatin-interacting phosphatase and kinase (STRIPAK) core complex to regulate dendritic spine distribution of the STRIPAK complex in hippocampal neurons. The sequence is that of Cortactin-binding protein 2 (CTTNBP2) from Rhinolophus ferrumequinum (Greater horseshoe bat).